Here is a 542-residue protein sequence, read N- to C-terminus: Protein MGF 505-11L (542 aa).

The protein belongs to the asfivirus MGF 505 family.

Functionally, plays a role in virus cell tropism, and may be required for efficient virus replication in macrophages. The protein is Protein MGF 505-11L of African swine fever virus (isolate Tick/Malawi/Lil 20-1/1983) (ASFV).